The chain runs to 178 residues: Large ribosomal subunit protein bL25 (178 aa).

Belongs to the bacterial ribosomal protein bL25 family. CTC subfamily. In terms of assembly, part of the 50S ribosomal subunit; part of the 5S rRNA/L5/L18/L25 subcomplex. Contacts the 5S rRNA. Binds to the 5S rRNA independently of L5 and L18.

In terms of biological role, this is one of the proteins that binds to the 5S RNA in the ribosome where it forms part of the central protuberance. This is Large ribosomal subunit protein bL25 from Campylobacter lari (strain RM2100 / D67 / ATCC BAA-1060).